The primary structure comprises 297 residues: Ectoine dioxygenase (297 aa).

L-ectoine is bound at residue Gln131. Lys137 provides a ligand contact to 2-oxoglutarate. Fe cation is bound by residues His148, Asp150, and His249.

Belongs to the PhyH family. EctD subfamily. Homodimer. Fe(2+) serves as cofactor.

The catalysed reaction is L-ectoine + 2-oxoglutarate + O2 = 5-hydroxyectoine + succinate + CO2. Involved in the biosynthesis of 5-hydroxyectoine, called compatible solute, which helps organisms to survive extreme osmotic stress by acting as a highly soluble organic osmolyte. Catalyzes the 2-oxoglutarate-dependent selective hydroxylation of L-ectoine to yield (4S,5S)-5-hydroxyectoine. In Streptomyces anulatus (Streptomyces chrysomallus), this protein is Ectoine dioxygenase.